Consider the following 678-residue polypeptide: uncharacterized protein (678 aa).

The next 2 membrane-spanning stretches (helical) occupy residues Leu-14 to Leu-34 and Gly-180 to Phe-200.

The protein belongs to the mycobacterial PPE family.

The protein localises to the cell membrane. This is an uncharacterized protein from Mycobacterium tuberculosis (strain ATCC 25618 / H37Rv).